A 492-amino-acid chain; its full sequence is Bifunctional protein GlmU (492 aa).

The interval Met-1–Arg-241 is pyrophosphorylase. Residues Leu-12–Gly-15, Lys-26, Gln-83, and Gly-88–Thr-89 contribute to the UDP-N-acetyl-alpha-D-glucosamine site. A Mg(2+)-binding site is contributed by Asp-114. Residues Gly-151, Glu-166, Asn-181, and Asn-239 each contribute to the UDP-N-acetyl-alpha-D-glucosamine site. Residue Asn-239 coordinates Mg(2+). The interval Val-242–Ala-262 is linker. Residues Gly-263 to Pro-492 form an N-acetyltransferase region. Positions 344 and 362 each coordinate UDP-N-acetyl-alpha-D-glucosamine. The Proton acceptor role is filled by His-374. Tyr-377 and Asn-388 together coordinate UDP-N-acetyl-alpha-D-glucosamine. Residues Ala-391, Asn-397–Tyr-398, and Ala-434 each bind acetyl-CoA. The tract at residues Gly-451–Pro-492 is disordered. The span at Thr-483–Pro-492 shows a compositional bias: pro residues.

This sequence in the N-terminal section; belongs to the N-acetylglucosamine-1-phosphate uridyltransferase family. In the C-terminal section; belongs to the transferase hexapeptide repeat family. In terms of assembly, homotrimer. Mg(2+) serves as cofactor.

Its subcellular location is the cytoplasm. It carries out the reaction alpha-D-glucosamine 1-phosphate + acetyl-CoA = N-acetyl-alpha-D-glucosamine 1-phosphate + CoA + H(+). The catalysed reaction is N-acetyl-alpha-D-glucosamine 1-phosphate + UTP + H(+) = UDP-N-acetyl-alpha-D-glucosamine + diphosphate. The protein operates within nucleotide-sugar biosynthesis; UDP-N-acetyl-alpha-D-glucosamine biosynthesis; N-acetyl-alpha-D-glucosamine 1-phosphate from alpha-D-glucosamine 6-phosphate (route II): step 2/2. Its pathway is nucleotide-sugar biosynthesis; UDP-N-acetyl-alpha-D-glucosamine biosynthesis; UDP-N-acetyl-alpha-D-glucosamine from N-acetyl-alpha-D-glucosamine 1-phosphate: step 1/1. It participates in bacterial outer membrane biogenesis; LPS lipid A biosynthesis. Its function is as follows. Catalyzes the last two sequential reactions in the de novo biosynthetic pathway for UDP-N-acetylglucosamine (UDP-GlcNAc). The C-terminal domain catalyzes the transfer of acetyl group from acetyl coenzyme A to glucosamine-1-phosphate (GlcN-1-P) to produce N-acetylglucosamine-1-phosphate (GlcNAc-1-P), which is converted into UDP-GlcNAc by the transfer of uridine 5-monophosphate (from uridine 5-triphosphate), a reaction catalyzed by the N-terminal domain. In Mycobacterium marinum (strain ATCC BAA-535 / M), this protein is Bifunctional protein GlmU.